Consider the following 228-residue polypeptide: uncharacterized protein (228 aa).

Positions 1–15 (MKQKYLFIASMALAG) are cleaved as a signal peptide. Cys-16 is lipidated: N-palmitoyl cysteine. The S-diacylglycerol cysteine moiety is linked to residue Cys-16.

It to P.multocida PM0015.

It localises to the cell membrane. This is an uncharacterized protein from Pasteurella multocida (strain Pm70).